Consider the following 163-residue polypeptide: Transcriptional repressor NrdR (163 aa).

The segment at Cys-3–Cys-34 is a zinc-finger region. Residues Leu-49–Glu-139 form the ATP-cone domain.

It belongs to the NrdR family. Zn(2+) is required as a cofactor.

Negatively regulates transcription of bacterial ribonucleotide reductase nrd genes and operons by binding to NrdR-boxes. In Akkermansia muciniphila (strain ATCC BAA-835 / DSM 22959 / JCM 33894 / BCRC 81048 / CCUG 64013 / CIP 107961 / Muc), this protein is Transcriptional repressor NrdR.